Reading from the N-terminus, the 64-residue chain is Large ribosomal subunit protein bL35 (64 aa).

The protein belongs to the bacterial ribosomal protein bL35 family.

This Pseudomonas savastanoi pv. phaseolicola (strain 1448A / Race 6) (Pseudomonas syringae pv. phaseolicola (strain 1448A / Race 6)) protein is Large ribosomal subunit protein bL35.